The primary structure comprises 319 residues: Protein MGF 360-8L (319 aa).

The protein belongs to the asfivirus MGF 360 family.

Plays a role in virus cell tropism, and may be required for efficient virus replication in macrophages. The protein is Protein MGF 360-8L of Ornithodoros (relapsing fever ticks).